A 1604-amino-acid polypeptide reads, in one-letter code: Ubiquitin carboxyl-terminal hydrolase 32 (1604 aa).

3 consecutive EF-hand domains span residues 91–126 (KDEE…VDGK), 228–263 (IRPS…CCRG), and 264–299 (PLAE…LLEV). Ca(2+)-binding residues include D241, N243, D245, H247, E252, D277, D279, D281, and E288. Positions 369 to 585 (ATPEEEGQII…ANLALPRPVI (217 aa)) constitute a DUSP domain. In terms of domain architecture, USP spans 734-1567 (TGLSNLGNTC…SAYILFYEQQ (834 aa)). The Nucleophile role is filled by C743. Y1173 is modified (phosphotyrosine). Disordered regions lie at residues 1343–1362 (KKVD…SKSP) and 1367–1431 (ANII…DASK). A phosphoserine mark is found at S1350, S1372, S1376, and S1454. Residues 1367–1399 (ANIISSPKGSPSSSRKSGTSCPSSKNSSPNSSP) show a composition bias toward low complexity. Catalysis depends on H1526, which acts as the Proton acceptor. S1588 is subject to Phosphoserine. C1601 is modified (cysteine methyl ester). The S-farnesyl cysteine moiety is linked to residue C1601. Positions 1602 to 1604 (VLQ) are cleaved as a propeptide — removed in mature form.

The protein belongs to the peptidase C19 family.

The protein localises to the golgi apparatus membrane. It catalyses the reaction Thiol-dependent hydrolysis of ester, thioester, amide, peptide and isopeptide bonds formed by the C-terminal Gly of ubiquitin (a 76-residue protein attached to proteins as an intracellular targeting signal).. Deubiquitinase that can remove conjugated ubiquitin from target proteins, such as RAB7A and LAMTOR1. Acts as a positive regulator of the mTORC1 signaling by mediating deubiquitination of LAMTOR1, thereby promoting the association between LAMTOR1 and the lysosomal V-ATPase complex and subsequent activation of the mTORC1 complex. The protein is Ubiquitin carboxyl-terminal hydrolase 32 (USP32) of Homo sapiens (Human).